The primary structure comprises 207 residues: Putative zinc finger protein 137 (207 aa).

A C2H2-type 1 zinc finger spans residues 72–94 (CKCNDCHKVFSNATTIANHWRIH). The segment at 100–122 (YKCNKCGKIFRHRSYLAVYQRTH) adopts a C2H2-type 2; degenerate zinc-finger fold. The C2H2-type 3; degenerate zinc finger occupies 128–150 (YKYHDCGKVFSQASSYAKHRRIH). 2 C2H2-type zinc fingers span residues 156–178 (HKCDDCGKVLTSRSHLIRHQRIH) and 184–206 (YKCLKCGKVFSLWALHAEHQKIH).

The protein belongs to the krueppel C2H2-type zinc-finger protein family.

It is found in the nucleus. Its function is as follows. May be involved in transcriptional regulation. The protein is Putative zinc finger protein 137 (ZNF137P) of Homo sapiens (Human).